The chain runs to 433 residues: MIKRLRGLLVLLCCVAGMAMAEEKNILVTSGSDRATPIAVVPFGVQGGSVLPEDMADIISNDLRNSGYYGPIPRQNMISLPTQASEVIFRDWKALGAQYVMVGSIVPSGGRLQVSYALFNVATEQQVLTGSVAGGVDQLRDMAHYIADQSFEKLTGIKGAFSTRMLYVTAERFSTNNTRYTLQRSDYDGARAVTLLQSREPILSPRFAPDGKRIAYVSFEQKRPRIFIQHIDTGRREQITNFEGLNGAPAWSPDGTRLAFVLSKDGNPDIYVMNVASRQITRVTAGPGINTEPFWGKDGNTLYFTSDRGGKPQIYKQSVGGGGAERVTFVGNYNANPKLSADEKTLVMIHRQQGFTNFKVAAQDLQRGSVKILTETSLDESPTVAPNGTMLIYATRQQGRGVLMLVSLNGRVRLPLPTAQGEVREPSWSPYLN.

The signal sequence occupies residues 1-21 (MIKRLRGLLVLLCCVAGMAMA).

Belongs to the TolB family. The Tol-Pal system is composed of five core proteins: the inner membrane proteins TolA, TolQ and TolR, the periplasmic protein TolB and the outer membrane protein Pal. They form a network linking the inner and outer membranes and the peptidoglycan layer.

The protein resides in the periplasm. Functionally, part of the Tol-Pal system, which plays a role in outer membrane invagination during cell division and is important for maintaining outer membrane integrity. This chain is Tol-Pal system protein TolB, found in Pseudomonas entomophila (strain L48).